Here is a 264-residue protein sequence, read N- to C-terminus: Small ribosomal subunit protein uS2 (264 aa).

The segment at 225-264 is disordered; sequence GKKAREERQLAAAKDAAGDAKPEAEEAPVAAEAEEAPAAE.

It belongs to the universal ribosomal protein uS2 family.

In Corynebacterium glutamicum (strain R), this protein is Small ribosomal subunit protein uS2.